Reading from the N-terminus, the 152-residue chain is Phospholipase A2 GL16-1 (152 aa).

The N-terminal stretch at 1 to 21 (MNPAHLLVLLAVCVSLLGAST) is a signal peptide. A propeptide spanning residues 22 to 27 (IPPLPL) is cleaved from the precursor. 7 disulfides stabilise this stretch: cysteine 38–cysteine 104, cysteine 54–cysteine 151, cysteine 56–cysteine 72, cysteine 71–cysteine 132, cysteine 78–cysteine 125, cysteine 88–cysteine 118, and cysteine 111–cysteine 123. Residues tyrosine 55, glycine 57, and glycine 59 each contribute to the Ca(2+) site. Histidine 75 is an active-site residue. Aspartate 76 contacts Ca(2+). Aspartate 126 is an active-site residue.

This sequence belongs to the phospholipase A2 family. Group I subfamily. Ca(2+) serves as cofactor.

It is found in the secreted. The catalysed reaction is a 1,2-diacyl-sn-glycero-3-phosphocholine + H2O = a 1-acyl-sn-glycero-3-phosphocholine + a fatty acid + H(+). Its function is as follows. PA2 catalyzes the calcium-dependent hydrolysis of the 2-acyl groups in 3-sn-phosphoglycerides. The protein is Phospholipase A2 GL16-1 of Laticauda semifasciata (Black-banded sea krait).